The sequence spans 550 residues: Glucose-6-phosphate isomerase (550 aa).

D-glucose 6-phosphate-binding positions include glycine 164 to serine 165, serine 215 to threonine 220, glutamine 359, glutamate 363, and histidine 394. Residue glutamate 363 is the Proton donor of the active site. Histidine 394 is an active-site residue. Threonine 455 bears the Phosphothreonine mark. Position 516 (lysine 516) interacts with D-glucose 6-phosphate. The active site involves lysine 516.

It belongs to the GPI family. In terms of assembly, homodimer.

It is found in the cytoplasm. It localises to the cytosol. The enzyme catalyses alpha-D-glucose 6-phosphate = beta-D-fructose 6-phosphate. Its pathway is carbohydrate degradation; glycolysis; D-glyceraldehyde 3-phosphate and glycerone phosphate from D-glucose: step 2/4. In the cytoplasm, catalyzes the conversion of glucose-6-phosphate to fructose-6-phosphate, the second step in glycolysis, and the reverse reaction during gluconeogenesis. This Schizosaccharomyces pombe (strain 972 / ATCC 24843) (Fission yeast) protein is Glucose-6-phosphate isomerase (pgi1).